Reading from the N-terminus, the 145-residue chain is tRNA-specific adenosine deaminase (145 aa).

The region spanning 1–116 is the CMP/dCMP-type deaminase domain; that stretch reads MREALKQAEI…SNLRYFNSKA (116 aa). His-48 contributes to the Zn(2+) binding site. The Proton donor role is filled by Glu-50. Cys-78 and Cys-81 together coordinate Zn(2+).

It belongs to the cytidine and deoxycytidylate deaminase family. In terms of assembly, homodimer. Zn(2+) serves as cofactor.

It carries out the reaction adenosine(34) in tRNA + H2O + H(+) = inosine(34) in tRNA + NH4(+). Functionally, catalyzes the deamination of adenosine to inosine at the wobble position 34 of tRNA(Arg2). This Rickettsia bellii (strain RML369-C) protein is tRNA-specific adenosine deaminase.